We begin with the raw amino-acid sequence, 370 residues long: Dihydrolipoyllysine-residue acetyltransferase component of acetoin cleaving system (370 aa).

Residues 4-79 (IHTLTMPKWG…PVGALLAVVV (76 aa)) form the Lipoyl-binding domain. At K45 the chain carries N6-lipoyllysine. The AB hydrolase-1 domain maps to 135 to 355 (PLVLVHGFGG…EAGHMVQMEA (221 aa)).

Requires (R)-lipoate as cofactor.

It catalyses the reaction N(6)-[(R)-dihydrolipoyl]-L-lysyl-[protein] + acetyl-CoA = N(6)-[(R)-S(8)-acetyldihydrolipoyl]-L-lysyl-[protein] + CoA. It participates in ketone degradation; acetoin degradation. The sequence is that of Dihydrolipoyllysine-residue acetyltransferase component of acetoin cleaving system (acoC) from Pseudomonas putida (Arthrobacter siderocapsulatus).